A 57-amino-acid chain; its full sequence is Small ribosomal subunit protein bS21 (57 aa).

The disordered stretch occupies residues Arg35–Phe57. Basic residues predominate over residues Val43–Phe57.

This sequence belongs to the bacterial ribosomal protein bS21 family.

In Alkaliphilus metalliredigens (strain QYMF), this protein is Small ribosomal subunit protein bS21.